The sequence spans 234 residues: Putative N-acetylmannosamine-6-phosphate 2-epimerase (234 aa).

The protein belongs to the NanE family.

It carries out the reaction an N-acyl-D-glucosamine 6-phosphate = an N-acyl-D-mannosamine 6-phosphate. The protein operates within amino-sugar metabolism; N-acetylneuraminate degradation; D-fructose 6-phosphate from N-acetylneuraminate: step 3/5. Converts N-acetylmannosamine-6-phosphate (ManNAc-6-P) to N-acetylglucosamine-6-phosphate (GlcNAc-6-P). In Klebsiella pneumoniae subsp. pneumoniae (strain ATCC 700721 / MGH 78578), this protein is Putative N-acetylmannosamine-6-phosphate 2-epimerase.